The chain runs to 238 residues: Large ribosomal subunit protein uL3 (238 aa).

Q157 carries the N5-methylglutamine modification.

This sequence belongs to the universal ribosomal protein uL3 family. As to quaternary structure, part of the 50S ribosomal subunit. Forms a cluster with proteins L14 and L19. Methylated by PrmB.

In terms of biological role, one of the primary rRNA binding proteins, it binds directly near the 3'-end of the 23S rRNA, where it nucleates assembly of the 50S subunit. The sequence is that of Large ribosomal subunit protein uL3 from Ruthia magnifica subsp. Calyptogena magnifica.